Reading from the N-terminus, the 526-residue chain is GMP synthase [glutamine-hydrolyzing] (526 aa).

The region spanning Arg-9–Leu-208 is the Glutamine amidotransferase type-1 domain. The active-site Nucleophile is Cys-86. Residues His-182 and Glu-184 contribute to the active site. The 193-residue stretch at Trp-209 to Arg-401 folds into the GMPS ATP-PPase domain. ATP is bound at residue Ser-236–Ser-242.

As to quaternary structure, homodimer.

It carries out the reaction XMP + L-glutamine + ATP + H2O = GMP + L-glutamate + AMP + diphosphate + 2 H(+). It functions in the pathway purine metabolism; GMP biosynthesis; GMP from XMP (L-Gln route): step 1/1. Its function is as follows. Catalyzes the synthesis of GMP from XMP. The protein is GMP synthase [glutamine-hydrolyzing] of Psychromonas ingrahamii (strain DSM 17664 / CCUG 51855 / 37).